Consider the following 272-residue polypeptide: Cell wall synthesis protein Wag31 (272 aa).

Disordered stretches follow at residues 1–22 (MPLT…GKRG) and 62–109 (AARS…SEDT). Positions 30–67 (AFLDLVENELTRLIEENADLRQRVAELDQELAAARSGA) form a coiled coil. Low complexity-rich tracts occupy residues 62 to 76 (AARS…ATSS) and 94 to 105 (VYEAPAQPAAPQ). Thr74 is modified (phosphothreonine). Residues 139-206 (LSDARAQAEA…AERKHSEIMG (68 aa)) are a coiled coil. The tract at residues 243–272 (ELGQRGSAAPVDSSANSDASGFGQFNRGNN) is disordered.

The protein belongs to the DivIVA family. As to quaternary structure, forms homooligomers. Interacts with PbpB and CwsA. In terms of processing, phosphorylated by PknA.

It localises to the cytoplasm. Its function is as follows. Important for maintaining cell shape and cell wall integrity by localizing peptidoglycan synthesis to the cell poles. Protects PbpB (PBP3, FtsI) from oxidative stress-induced cleavage. The polypeptide is Cell wall synthesis protein Wag31 (wag31) (Mycolicibacterium smegmatis (strain ATCC 700084 / mc(2)155) (Mycobacterium smegmatis)).